We begin with the raw amino-acid sequence, 286 residues long: Acetyl-coenzyme A carboxylase carboxyl transferase subunit beta (286 aa).

In terms of domain architecture, CoA carboxyltransferase N-terminal spans 27 to 286; that stretch reads LMTKCPKCKL…HSEETNHATI (260 aa). The Zn(2+) site is built by cysteine 31, cysteine 34, cysteine 50, and cysteine 52. A C4-type zinc finger spans residues 31 to 52; the sequence is CPKCKLIQYTKQLEANLKVCVC.

Belongs to the AccD/PCCB family. As to quaternary structure, acetyl-CoA carboxylase is a heterohexamer composed of biotin carboxyl carrier protein (AccB), biotin carboxylase (AccC) and two subunits each of ACCase subunit alpha (AccA) and ACCase subunit beta (AccD). It depends on Zn(2+) as a cofactor.

It is found in the cytoplasm. It carries out the reaction N(6)-carboxybiotinyl-L-lysyl-[protein] + acetyl-CoA = N(6)-biotinyl-L-lysyl-[protein] + malonyl-CoA. It functions in the pathway lipid metabolism; malonyl-CoA biosynthesis; malonyl-CoA from acetyl-CoA: step 1/1. Functionally, component of the acetyl coenzyme A carboxylase (ACC) complex. Biotin carboxylase (BC) catalyzes the carboxylation of biotin on its carrier protein (BCCP) and then the CO(2) group is transferred by the transcarboxylase to acetyl-CoA to form malonyl-CoA. This is Acetyl-coenzyme A carboxylase carboxyl transferase subunit beta from Exiguobacterium sibiricum (strain DSM 17290 / CCUG 55495 / CIP 109462 / JCM 13490 / 255-15).